Consider the following 286-residue polypeptide: 4-diphosphocytidyl-2-C-methyl-D-erythritol kinase (286 aa).

The active site involves lysine 13. 101-111 (PQGAGLGGGSS) lines the ATP pocket. The active site involves aspartate 143.

This sequence belongs to the GHMP kinase family. IspE subfamily.

The catalysed reaction is 4-CDP-2-C-methyl-D-erythritol + ATP = 4-CDP-2-C-methyl-D-erythritol 2-phosphate + ADP + H(+). The protein operates within isoprenoid biosynthesis; isopentenyl diphosphate biosynthesis via DXP pathway; isopentenyl diphosphate from 1-deoxy-D-xylulose 5-phosphate: step 3/6. Catalyzes the phosphorylation of the position 2 hydroxy group of 4-diphosphocytidyl-2C-methyl-D-erythritol. The sequence is that of 4-diphosphocytidyl-2-C-methyl-D-erythritol kinase from Idiomarina loihiensis (strain ATCC BAA-735 / DSM 15497 / L2-TR).